A 328-amino-acid chain; its full sequence is Methionyl-tRNA formyltransferase (328 aa).

110 to 113 contributes to the (6S)-5,6,7,8-tetrahydrofolate binding site; that stretch reads SLLP.

It belongs to the Fmt family.

It catalyses the reaction L-methionyl-tRNA(fMet) + (6R)-10-formyltetrahydrofolate = N-formyl-L-methionyl-tRNA(fMet) + (6S)-5,6,7,8-tetrahydrofolate + H(+). Attaches a formyl group to the free amino group of methionyl-tRNA(fMet). The formyl group appears to play a dual role in the initiator identity of N-formylmethionyl-tRNA by promoting its recognition by IF2 and preventing the misappropriation of this tRNA by the elongation apparatus. This chain is Methionyl-tRNA formyltransferase, found in Prochlorococcus marinus (strain MIT 9215).